A 94-amino-acid polypeptide reads, in one-letter code: Co-chaperonin GroES (94 aa).

This sequence belongs to the GroES chaperonin family. As to quaternary structure, heptamer of 7 subunits arranged in a ring. Interacts with the chaperonin GroEL.

It is found in the cytoplasm. In terms of biological role, together with the chaperonin GroEL, plays an essential role in assisting protein folding. The GroEL-GroES system forms a nano-cage that allows encapsulation of the non-native substrate proteins and provides a physical environment optimized to promote and accelerate protein folding. GroES binds to the apical surface of the GroEL ring, thereby capping the opening of the GroEL channel. This chain is Co-chaperonin GroES, found in Streptococcus pneumoniae (strain 70585).